An 867-amino-acid polypeptide reads, in one-letter code: MRVKGIRKNYQHLWRWGTMLLGILMICSAAEQLWVTVYYGVPVWKEAATTLFCASDAKAYDTEVHNVWATHACVPTDPNPQEVVLENVTEKFNMWKNNMVEQMHEDIISLWDQSLKPCVKLTPLCVTLNCIDWGNDTSPNATNTTSSGGEKMEKGEMKNCSFNITTSIRDKVQKEHALFYKHDVVPINNSTKDNIKNDNSTRYRLISCNTSVITQACPKISFEPIPIHYCAPAGFAIIKCNDKKFNGTGPCTNVSTVQCTHGIKPVVSTQLLLNGSLAEEEVVIRSENFTDNAKTIIVQLKEPVVINCTRPSKTTRRRIHIGPGRAFYTTKQIAGDLRQAHCNINRARWNATLKQIVGKLRKQFVNKTIVFNRSSGGDPEIVMHSFNCGGEFFYCNSTQLFNSTWLSNSTWNDTEGSNNTGGNDTITLPCRIKQIINMWQEVGKAMYAPPIEGQIRCSSNITGLLLTRDGGDNQNETETFRPGGGNMRDNWRSELYKYKVVKIELLGVAPTKAKRRVVQREKRAVGIGAVFLGFLGAAGSTMGASMTLTVQARLLLSGIVQQQNNLLRAIEGQQHLLQLTVWGIKQLQARILAVERYLKDQQLLGIWGCSGKLICTTAVPWNASWSNKSLEEIWDNMTWMEWEREIDNYTSLIYTLIEESQNQQEKNEQELLGLDKWASLWNWFTITNWLWYIRIFIMIVGGLVGLRIVFTVLSIVNRVRQGYSPLSFQTRLPAPRGPDRPEGIEEEGGDRDRDRSGQLVDGLLAIIWVDLRSLCLFSYHRLRDLLLIVTRIVELLGRRGWEALKYWWNLLQYWSQELKNSAVSLFNAIAIAVAEGTDRVLKILQRAFRAILHIPTRIRQGLERALL.

The signal sequence occupies residues 1–31; the sequence is MRVKGIRKNYQHLWRWGTMLLGILMICSAAE. The Extracellular segment spans residues 32 to 695; it reads QLWVTVYYGV…ITNWLWYIRI (664 aa). An intrachain disulfide couples Cys-53 to Cys-73. 15 N-linked (GlcNAc...) asparagine; by host glycosylation sites follow: Asn-87, Asn-135, Asn-140, Asn-143, Asn-159, Asn-163, Asn-188, Asn-189, Asn-199, Asn-209, Asn-246, Asn-253, Asn-274, Asn-288, and Asn-307. Cystine bridges form between Cys-118–Cys-217, Cys-125–Cys-208, Cys-130–Cys-160, Cys-230–Cys-259, and Cys-240–Cys-251. Positions 130 to 159 are V1; that stretch reads CIDWGNDTSPNATNTTSSGGEKMEKGEMKN. Residues 160 to 208 form a V2 region; sequence CSFNITTSIRDKVQKEHALFYKHDVVPINNSTKDNIKNDNSTRYRLISC. Residues 308–341 form a V3 region; the sequence is CTRPSKTTRRRIHIGPGRAFYTTKQIAGDLRQAH. The cysteines at positions 308 and 342 are disulfide-linked. 3 N-linked (GlcNAc...) asparagine; by host glycosylation sites follow: Asn-350, Asn-366, and Asn-372. A CD4-binding loop region spans residues 374–384; it reads SSGGDPEIVMH. Cystine bridges form between Cys-388-Cys-457 and Cys-395-Cys-430. The segment at 395–430 is V4; the sequence is CNSTQLFNSTWLSNSTWNDTEGSNNTGGNDTITLPC. N-linked (GlcNAc...) asparagine; by host glycans are attached at residues Asn-396, Asn-402, Asn-408, Asn-412, Asn-418, Asn-423, Asn-460, and Asn-475. 2 V5 regions span residues 473–483 and 475–483; these read NQNETETFRPG and NETETFRPG. The tract at residues 524-544 is fusion peptide; sequence AVGIGAVFLGFLGAAGSTMGA. The immunosuppression stretch occupies residues 585-603; that stretch reads KQLQARILAVERYLKDQQL. An intrachain disulfide couples Cys-609 to Cys-615. Asn-622, Asn-627, Asn-636, and Asn-648 each carry an N-linked (GlcNAc...) asparagine; by host glycan. Positions 644 to 678 form a coiled coil; sequence REIDNYTSLIYTLIEESQNQQEKNEQELLGLDKWA. Positions 673 to 694 are MPER; binding to GalCer; it reads GLDKWASLWNWFTITNWLWYIR. A helical membrane pass occupies residues 696 to 716; that stretch reads FIMIVGGLVGLRIVFTVLSIV. Residues 717-867 lie on the Cytoplasmic side of the membrane; it reads NRVRQGYSPL…IRQGLERALL (151 aa). The short motif at 723–726 is the YXXL motif; contains endocytosis signal element; that stretch reads YSPL. Positions 730 to 755 are disordered; the sequence is TRLPAPRGPDRPEGIEEEGGDRDRDR. A lipid anchor (S-palmitoyl cysteine; by host) is attached at Cys-775. The Di-leucine internalization motif signature appears at 866-867; sequence LL.

It belongs to the HIV-1 env protein family. The mature envelope protein (Env) consists of a homotrimer of non-covalently associated gp120-gp41 heterodimers. The resulting complex protrudes from the virus surface as a spike. There seems to be as few as 10 spikes on the average virion. Interacts with host CD4, CCR5 and CXCR4. Gp120 also interacts with the C-type lectins CD209/DC-SIGN and CLEC4M/DC-SIGNR (collectively referred to as DC-SIGN(R)). Gp120 and gp41 interact with GalCer. Gp120 interacts with host ITGA4/ITGB7 complex; on CD4+ T-cells, this interaction results in rapid activation of integrin ITGAL/LFA-1, which facilitates efficient cell-to-cell spreading of HIV-1. Gp120 interacts with cell-associated heparan sulfate; this interaction increases virus infectivity on permissive cells and may be involved in infection of CD4- cells. In terms of assembly, the mature envelope protein (Env) consists of a homotrimer of non-covalently associated gp120-gp41 heterodimers. The resulting complex protrudes from the virus surface as a spike. There seems to be as few as 10 spikes on the average virion. Highly glycosylated by host. The high number of glycan on the protein is reffered to as 'glycan shield' because it contributes to hide protein sequence from adaptive immune system. In terms of processing, palmitoylation of the transmembrane protein and of Env polyprotein (prior to its proteolytic cleavage) is essential for their association with host cell membrane lipid rafts. Palmitoylation is therefore required for envelope trafficking to classical lipid rafts, but not for viral replication. Post-translationally, specific enzymatic cleavages in vivo yield mature proteins. Envelope glycoproteins are synthesized as an inactive precursor that is heavily N-glycosylated and processed likely by host cell furin in the Golgi to yield the mature SU and TM proteins. The cleavage site between SU and TM requires the minimal sequence [KR]-X-[KR]-R. About 2 of the 9 disulfide bonds of gp41 are reduced by P4HB/PDI, following binding to CD4 receptor.

It localises to the virion membrane. Its subcellular location is the host cell membrane. The protein resides in the host endosome membrane. Its function is as follows. Oligomerizes in the host endoplasmic reticulum into predominantly trimers. In a second time, gp160 transits in the host Golgi, where glycosylation is completed. The precursor is then proteolytically cleaved in the trans-Golgi and thereby activated by cellular furin or furin-like proteases to produce gp120 and gp41. Functionally, attaches the virus to the host lymphoid cell by binding to the primary receptor CD4. This interaction induces a structural rearrangement creating a high affinity binding site for a chemokine coreceptor like CXCR4 and/or CCR5. Acts as a ligand for CD209/DC-SIGN and CLEC4M/DC-SIGNR, which are respectively found on dendritic cells (DCs), and on endothelial cells of liver sinusoids and lymph node sinuses. These interactions allow capture of viral particles at mucosal surfaces by these cells and subsequent transmission to permissive cells. HIV subverts the migration properties of dendritic cells to gain access to CD4+ T-cells in lymph nodes. Virus transmission to permissive T-cells occurs either in trans (without DCs infection, through viral capture and transmission), or in cis (following DCs productive infection, through the usual CD4-gp120 interaction), thereby inducing a robust infection. In trans infection, bound virions remain infectious over days and it is proposed that they are not degraded, but protected in non-lysosomal acidic organelles within the DCs close to the cell membrane thus contributing to the viral infectious potential during DCs' migration from the periphery to the lymphoid tissues. On arrival at lymphoid tissues, intact virions recycle back to DCs' cell surface allowing virus transmission to CD4+ T-cells. In terms of biological role, acts as a class I viral fusion protein. Under the current model, the protein has at least 3 conformational states: pre-fusion native state, pre-hairpin intermediate state, and post-fusion hairpin state. During fusion of viral and target intracellular membranes, the coiled coil regions (heptad repeats) assume a trimer-of-hairpins structure, positioning the fusion peptide in close proximity to the C-terminal region of the ectodomain. The formation of this structure appears to drive apposition and subsequent fusion of viral and target cell membranes. Complete fusion occurs in host cell endosomes and is dynamin-dependent, however some lipid transfer might occur at the plasma membrane. The virus undergoes clathrin-dependent internalization long before endosomal fusion, thus minimizing the surface exposure of conserved viral epitopes during fusion and reducing the efficacy of inhibitors targeting these epitopes. Membranes fusion leads to delivery of the nucleocapsid into the cytoplasm. The protein is Envelope glycoprotein gp160 of Homo sapiens (Human).